A 238-amino-acid polypeptide reads, in one-letter code: Aspartate/glutamate leucyltransferase (238 aa).

This sequence belongs to the R-transferase family. Bpt subfamily.

The protein localises to the cytoplasm. It carries out the reaction N-terminal L-glutamyl-[protein] + L-leucyl-tRNA(Leu) = N-terminal L-leucyl-L-glutamyl-[protein] + tRNA(Leu) + H(+). It catalyses the reaction N-terminal L-aspartyl-[protein] + L-leucyl-tRNA(Leu) = N-terminal L-leucyl-L-aspartyl-[protein] + tRNA(Leu) + H(+). Functionally, functions in the N-end rule pathway of protein degradation where it conjugates Leu from its aminoacyl-tRNA to the N-termini of proteins containing an N-terminal aspartate or glutamate. The polypeptide is Aspartate/glutamate leucyltransferase (Shewanella sp. (strain MR-7)).